Consider the following 463-residue polypeptide: Glycine--tRNA ligase (463 aa).

Positions 102 and 165 each coordinate substrate. ATP is bound by residues 197–199, 207–212, 284–285, and 328–331; these read RNE, FRTREF, EL, and GLTR. 212–216 is a binding site for substrate; the sequence is FEQME. 324–328 is a substrate binding site; it reads EPAAG.

The protein belongs to the class-II aminoacyl-tRNA synthetase family. As to quaternary structure, homodimer.

The protein localises to the cytoplasm. The catalysed reaction is tRNA(Gly) + glycine + ATP = glycyl-tRNA(Gly) + AMP + diphosphate. Catalyzes the attachment of glycine to tRNA(Gly). The polypeptide is Glycine--tRNA ligase (Mycobacterium bovis (strain ATCC BAA-935 / AF2122/97)).